Here is a 345-residue protein sequence, read N- to C-terminus: MLTSRAEIILRSIVRQYITKAVPVSSSSILEDCGLDICSATIRNEVVRLEIEGYILRPHHSAGSIPADKGYRYYVESLKDVELPTNDKFLIRHLFHQVEKEMEEWLNLTVAVLSQRVQSMAVVTMPRQTQGKVHHIELVSLQDNLVLVVLILRGAKVKQQLVNFENVVSQPELTLISNRLNDAYDGLTRFQIEQKPLGLNHDELKVKDSLVKMMRGEDEQESREPFFDGLHYMLEQPEFHQNQRAQEIMQLLEQKKLSKMIVPPMPFNRGVQVYIGQENASAEIRDYSLIVSQYGIPDEAVGTIGVIGPTRMAYERALSAVSYLSLVMSTLVAELYGKAPVDKDE.

The protein belongs to the HrcA family.

Negative regulator of class I heat shock genes (grpE-dnaK-dnaJ and groELS operons). Prevents heat-shock induction of these operons. The sequence is that of Heat-inducible transcription repressor HrcA from Dehalococcoides mccartyi (strain ATCC BAA-2100 / JCM 16839 / KCTC 5957 / BAV1).